The sequence spans 349 residues: MGFSSSLSCSAMGALIVGCLLLQASNSNAQLRPDFYFRTCPPIFNIIGDTIVNELRTDPRIAASLLRLHFHDCFVRGCDASILLDNSTSFRTEKDAAPNKNSVRGFDVIDRMKAAIERACPRTVSCADIITIASQISVLLSGGPWWPVPLGRRDSVEAFFALANTALPSPFSTLTQLKTAFADVGLNRPSDLVALSGGHTFGKAQCQFVTPRLYNFNGTNRPDPSLNPTYLVELRRLCPQNGNGTVLVNFDSVTPTTFDRQYYTNLLNGKGLIQSDQVLFSTPGADTIPLVNQYSSNTFVFFGAFVDAMIRMGNLKPLTGTQGEIRQNCRVVNPRIRVVENDDGVVSSI.

Residues 1 to 29 form the signal peptide; the sequence is MGFSSSLSCSAMGALIVGCLLLQASNSNA. Residue Q30 is modified to Pyrrolidone carboxylic acid. 4 disulfides stabilise this stretch: C40–C120, C73–C78, C126–C329, and C206–C238. The Proton acceptor role is filled by H71. Ca(2+)-binding residues include D72, V75, G77, D79, and S81. Residue N86 is glycosylated (N-linked (GlcNAc...) asparagine). P168 is a substrate binding site. H199 provides a ligand contact to heme b. T200 is a Ca(2+) binding site. 2 N-linked (GlcNAc...) asparagine glycosylation sites follow: N217 and N243. Positions 251, 254, and 259 each coordinate Ca(2+).

Belongs to the peroxidase family. Classical plant (class III) peroxidase subfamily. Heme b is required as a cofactor. Requires Ca(2+) as cofactor.

It is found in the secreted. Its subcellular location is the vacuole. The enzyme catalyses 2 a phenolic donor + H2O2 = 2 a phenolic radical donor + 2 H2O. Removal of H(2)O(2), oxidation of toxic reductants, biosynthesis and degradation of lignin, suberization, auxin catabolism, response to environmental stresses such as wounding, pathogen attack and oxidative stress. These functions might be dependent on each isozyme/isoform in each plant tissue. The sequence is that of Peroxidase 23 (PER23) from Arabidopsis thaliana (Mouse-ear cress).